The primary structure comprises 215 residues: MSEAKRLAAEKAIDYVEDGMIVGVGTGSTVAYFIDALGRIGHRIKGAVSSSEQSTARLRQHGIEVLDLNHTGNLSLYVDGADECDPNRCLIKGGGAALTREKIIAEASERFICIVDPSKQVPVLGKFPLPVEVIPMARSLVARQILALTGGQPVWRDGVVTDNGNVVLDVHHLQVTDPVGLERSLNQIPGVVCVGLFARRPADVVIVGGEPPQVI.

Residues 26 to 29, 79 to 82, and 92 to 95 each bind substrate; these read TGST, DGAD, and KGGG. Catalysis depends on E101, which acts as the Proton acceptor. Residue K119 participates in substrate binding.

This sequence belongs to the ribose 5-phosphate isomerase family. As to quaternary structure, homodimer.

The catalysed reaction is aldehydo-D-ribose 5-phosphate = D-ribulose 5-phosphate. It functions in the pathway carbohydrate degradation; pentose phosphate pathway; D-ribose 5-phosphate from D-ribulose 5-phosphate (non-oxidative stage): step 1/1. Functionally, catalyzes the reversible conversion of ribose-5-phosphate to ribulose 5-phosphate. In Xanthomonas axonopodis pv. citri (strain 306), this protein is Ribose-5-phosphate isomerase A.